A 313-amino-acid chain; its full sequence is Acetyl-coenzyme A carboxylase carboxyl transferase subunit beta, chloroplastic (313 aa).

One can recognise a CoA carboxyltransferase N-terminal domain in the interval 47–313 (LWTRCDNCEN…SAPCRRSNNS (267 aa)). Zn(2+)-binding residues include Cys51, Cys54, Cys70, and Cys73. Residues 51-73 (CDNCENMLYIRFLRQNKRICEEC) form a C4-type zinc finger.

This sequence belongs to the AccD/PCCB family. In terms of assembly, acetyl-CoA carboxylase is a heterohexamer composed of biotin carboxyl carrier protein, biotin carboxylase and 2 subunits each of ACCase subunit alpha and ACCase plastid-coded subunit beta (accD). Requires Zn(2+) as cofactor.

Its subcellular location is the plastid. It is found in the chloroplast stroma. The catalysed reaction is N(6)-carboxybiotinyl-L-lysyl-[protein] + acetyl-CoA = N(6)-biotinyl-L-lysyl-[protein] + malonyl-CoA. The protein operates within lipid metabolism; malonyl-CoA biosynthesis; malonyl-CoA from acetyl-CoA: step 1/1. Functionally, component of the acetyl coenzyme A carboxylase (ACC) complex. Biotin carboxylase (BC) catalyzes the carboxylation of biotin on its carrier protein (BCCP) and then the CO(2) group is transferred by the transcarboxylase to acetyl-CoA to form malonyl-CoA. In Anthoceros angustus (Hornwort), this protein is Acetyl-coenzyme A carboxylase carboxyl transferase subunit beta, chloroplastic.